The chain runs to 402 residues: 2,3-bisphosphoglycerate-independent phosphoglycerate mutase 2 (402 aa).

It belongs to the BPG-independent phosphoglycerate mutase family. A-PGAM subfamily.

The catalysed reaction is (2R)-2-phosphoglycerate = (2R)-3-phosphoglycerate. Its pathway is carbohydrate degradation; glycolysis; pyruvate from D-glyceraldehyde 3-phosphate: step 3/5. Catalyzes the interconversion of 2-phosphoglycerate and 3-phosphoglycerate. In Methanothermobacter thermautotrophicus (strain ATCC 29096 / DSM 1053 / JCM 10044 / NBRC 100330 / Delta H) (Methanobacterium thermoautotrophicum), this protein is 2,3-bisphosphoglycerate-independent phosphoglycerate mutase 2 (apgM2).